Consider the following 206-residue polypeptide: ATP-dependent Clp protease proteolytic subunit 1 (206 aa).

Ser-106 acts as the Nucleophile in catalysis. His-131 is a catalytic residue.

The protein belongs to the peptidase S14 family. Fourteen ClpP subunits assemble into 2 heptameric rings which stack back to back to give a disk-like structure with a central cavity, resembling the structure of eukaryotic proteasomes.

The protein localises to the cytoplasm. It carries out the reaction Hydrolysis of proteins to small peptides in the presence of ATP and magnesium. alpha-casein is the usual test substrate. In the absence of ATP, only oligopeptides shorter than five residues are hydrolyzed (such as succinyl-Leu-Tyr-|-NHMec, and Leu-Tyr-Leu-|-Tyr-Trp, in which cleavage of the -Tyr-|-Leu- and -Tyr-|-Trp bonds also occurs).. Its function is as follows. Cleaves peptides in various proteins in a process that requires ATP hydrolysis. Has a chymotrypsin-like activity. Plays a major role in the degradation of misfolded proteins. The chain is ATP-dependent Clp protease proteolytic subunit 1 from Methylococcus capsulatus (strain ATCC 33009 / NCIMB 11132 / Bath).